Consider the following 792-residue polypeptide: Protein SEY1 homolog 2 (792 aa).

The Cytoplasmic segment spans residues 1 to 638 (MEQIITGDGA…NIKAQANREQ (638 aa)). Positions 28-245 (GVDYHTVAII…LKDYLFAEKS (218 aa)) constitute a GB1/RHD3-type G domain. Residue 38-45 (GPQSSGKS) participates in GTP binding. The helical transmembrane segment at 639–659 (IPGWAWLATFLCSSNYIMKLL) threads the bilayer. Topologically, residues 660 to 662 (ANP) are lumenal. Residues 663 to 683 (IFFALAVIIGGIYSILRMLGL) traverse the membrane as a helical segment. The Cytoplasmic segment spans residues 684 to 792 (QDVAKKTLLD…LTRTQSLEFM (109 aa)). Positions 691 to 718 (LLDKFNSLLKNLTKDENEQEKEGEENEE) form a coiled coil. The tract at residues 703-792 (TKDENEQEKE…LTRTQSLEFM (90 aa)) is disordered. The span at 707–723 (NEQEKEGEENEEPEEDQ) shows a compositional bias: acidic residues. 2 stretches are compositionally biased toward polar residues: residues 739–751 (SVSQEFSQKSIYK) and 764–774 (IPQTSPLGNND).

Belongs to the TRAFAC class dynamin-like GTPase superfamily. GB1/RHD3 GTPase family. RHD3 subfamily.

It is found in the endoplasmic reticulum membrane. In terms of biological role, probable GTP-binding protein that may be involved in cell development. This is Protein SEY1 homolog 2 from Trichomonas vaginalis (strain ATCC PRA-98 / G3).